The following is a 222-amino-acid chain: Pleckstrin homology domain-containing family B member 2 (222 aa).

The 108-residue stretch at 2–109 (AFVKSGWLLR…WKFTLQDSRT (108 aa)) folds into the PH domain. Lysine 20 is an a 1,2-diacyl-sn-glycero-3-phospho-L-serine binding site.

The protein resides in the recycling endosome membrane. In terms of biological role, involved in retrograde transport of recycling endosomes. The chain is Pleckstrin homology domain-containing family B member 2 (PLEKHB2) from Pongo abelii (Sumatran orangutan).